The chain runs to 173 residues: MGARVTRALRNFNVEKRAEREISKRKPSMAPKHPSTRDLLQEHRSQYPEIEEVVSKKDNKLLSLLRDVYVDSKDPVPALPVKVEPRQEPKEFRLPIGNHFDKNITDIPKGKITVVEALTLLNNHKLSPETWTAEKIAQEYYLELKDVNSLLKYFVTFEVKILPPEDRKAIQSK.

Gly-2 carries N-myristoyl glycine lipidation. The disordered stretch occupies residues 16 to 40 (KRAEREISKRKPSMAPKHPSTRDLL). Ser-35 carries the phosphoserine modification.

The protein belongs to the NDUFAF4 family. In terms of assembly, binds calmodulin. Interacts with NDUFAF3. In terms of processing, phosphorylated on serine. Prolactin stimulate serine phosphorylation.

It is found in the mitochondrion. The protein localises to the membrane. May be involved in cell proliferation and survival of hormone-dependent tumor cells. Involved in the assembly of mitochondrial NADH:ubiquinone oxidoreductase complex (complex I). The sequence is that of NADH dehydrogenase [ubiquinone] 1 alpha subcomplex assembly factor 4 (Ndufaf4) from Mus musculus (Mouse).